Consider the following 389-residue polypeptide: Probable nitrate transporter NarT (389 aa).

12 consecutive transmembrane segments (helical) span residues 14–34 (TLSL…MPFI), 45–65 (ISII…PFGY), 69–89 (IVGA…PIFF), 97–117 (GMLM…SVGV), 139–159 (GNIG…IIGW), 161–181 (TTVR…FIFG), 211–231 (WYFI…NYLV), 246–266 (GVFI…GDKF), 268–288 (AVKV…ILGI), 294–314 (LFTV…GLIF), 331–351 (IVSM…TYVA), and 353–373 (LTGS…IALF).

This sequence belongs to the major facilitator superfamily. Nitrate/nitrite porter (TC 2.A.1.8) family.

The protein localises to the cell membrane. In terms of biological role, probably required for nitrate uptake under anoxic conditions. Also possibly involved in excretion of nitrite produced by the dissimilatory reduction of nitrate. In Staphylococcus aureus (strain USA300), this protein is Probable nitrate transporter NarT (narT).